A 131-amino-acid polypeptide reads, in one-letter code: Translation initiation factor 5A (131 aa).

At lysine 36 the chain carries Hypusine.

Belongs to the eIF-5A family.

Its subcellular location is the cytoplasm. Its function is as follows. Functions by promoting the formation of the first peptide bond. The polypeptide is Translation initiation factor 5A (eIF5A) (Metallosphaera sedula (strain ATCC 51363 / DSM 5348 / JCM 9185 / NBRC 15509 / TH2)).